The primary structure comprises 193 residues: Probable GTP-binding protein EngB (193 aa).

One can recognise an EngB-type G domain in the interval 22-193 (GLPEFAFAGR…LIAVLESYLA (172 aa)). Residues 30–37 (GRSNVGKS), 57–61 (GKTQG), 75–78 (DLPG), 142–145 (TKID), and 173–175 (FSS) each bind GTP. Positions 37 and 59 each coordinate Mg(2+).

It belongs to the TRAFAC class TrmE-Era-EngA-EngB-Septin-like GTPase superfamily. EngB GTPase family. Requires Mg(2+) as cofactor.

In terms of biological role, necessary for normal cell division and for the maintenance of normal septation. The sequence is that of Probable GTP-binding protein EngB from Desulfotalea psychrophila (strain LSv54 / DSM 12343).